The following is a 724-amino-acid chain: Threonine--tRNA ligase 2, cytoplasmic (724 aa).

N-acetylalanine is present on A2. The stretch at 44-72 (QAEGPCLTREVAQLRAENRELRHCLYRLR) forms a coiled coil. Residues 90–112 (RAEAGRAAAGAQPPPSQSLEEDV) are disordered. The TGS domain occupies 155–220 (DSSNVITVRV…EGDATVELLT (66 aa)). The residue at position 451 (S451) is a Phosphoserine.

It belongs to the class-II aminoacyl-tRNA synthetase family. May be a component of the multisynthetase complex (MSC), a large multi-subunit complex which contains at least eight different aminoacyl-tRNA synthetases plus three auxillary subunits AIMP1, AIMP2 and EEF1E1. Interacts with the MSC components EPRS1, AIMP1, AIMP2 and KARS1.

The protein resides in the cytoplasm. Its subcellular location is the nucleus. The catalysed reaction is tRNA(Thr) + L-threonine + ATP = L-threonyl-tRNA(Thr) + AMP + diphosphate + H(+). Its function is as follows. Catalyzes the attachment of threonine to tRNA(Thr) in a two-step reaction: threonine is first activated by ATP to form Thr-AMP and then transferred to the acceptor end of tRNA(Thr). Also edits incorrectly charged tRNA(Thr) via its editing domain, at the post-transfer stage. The polypeptide is Threonine--tRNA ligase 2, cytoplasmic (TARS3) (Bos taurus (Bovine)).